The chain runs to 56 residues: MRSVLVLACLAAASASAISDGMYGTMVFTKDMMVNLDMKMKELCIMKLLNHILQPT.

Belongs to the hemocyanin family. As to expression, expressed in fat body and ovary.

The protein localises to the secreted. In terms of biological role, larval storage protein (LSP) which may serve as a store of amino acids for synthesis of adult proteins. The biosynthesis, accumulation and sequestration of storage protein-1 takes place during metamorphosis and saves energy for the non-feeding pupal stage. May also be essential for egg formation. The sequence is that of Sex-specific storage protein 1 from Amsacta albistriga (Red hairy caterpillar).